We begin with the raw amino-acid sequence, 762 residues long: Catalase-peroxidase (762 aa).

Residues 1–22 form a disordered region; that stretch reads MAEAKCPFSQSRSNANVAGGGT. Positions 96 to 242 form a cross-link, tryptophyl-tyrosyl-methioninium (Trp-Tyr) (with M-268); that stretch reads WHSAGTYRVF…LAASHMGLIY (147 aa). His-97 acts as the Proton acceptor in catalysis. Positions 242–268 form a cross-link, tryptophyl-tyrosyl-methioninium (Tyr-Met) (with W-96); that stretch reads YVNPEGPDGNPDPVAAARDIRTTFGRM. His-283 serves as a coordination point for heme b.

Belongs to the peroxidase family. Peroxidase/catalase subfamily. In terms of assembly, homodimer or homotetramer. Requires heme b as cofactor. In terms of processing, formation of the three residue Trp-Tyr-Met cross-link is important for the catalase, but not the peroxidase activity of the enzyme.

It localises to the cytoplasm. It catalyses the reaction H2O2 + AH2 = A + 2 H2O. The enzyme catalyses 2 H2O2 = O2 + 2 H2O. Functionally, bifunctional enzyme with both catalase and broad-spectrum peroxidase activity. The chain is Catalase-peroxidase from Aspergillus niger (strain ATCC MYA-4892 / CBS 513.88 / FGSC A1513).